The sequence spans 254 residues: Emerin (254 aa).

Met-1 carries the post-translational modification N-acetylmethionine. Residues 1–45 (MDNYADLSDTELTTLLRRYNIPHGPVVGSTRRLYEKKIFEYETQR) form the LEM domain. Ser-8 and Ser-29 each carry phosphoserine. Residues 46–222 (RRLSPPSSSA…PGAGLGQDRQ (177 aa)) are interaction with F-actin. Phosphoserine; by PKA is present on Ser-49. Phosphoserine occurs at positions 54, 60, 87, 98, 141, 142, and 143. Tyr-161 carries the phosphotyrosine modification. Positions 168–186 (RPVSASRSSLDLSYYPTSS) are interaction with CTNNB1. A phosphoserine mark is found at Ser-171, Ser-173, and Ser-175. Residues 223-243 (VPLWGQLLLFLVFVIVLFFIY) form a helical membrane-spanning segment.

In terms of assembly, interacts with lamins A and C, BANF1, GMCL, BCLAF1 and YTHDC1/YT521. Interacts with TMEM43; the interaction retains emerin in the nuclear inner membrane. Interacts with SUN1 and SUN2. Interacts with ACTB, SPTAN1, F-actin, CTNNB1 and beta-tubulin. Interacts with TMEM201. Interacts with NEMP1. In terms of processing, found in four different phosphorylated forms, three of which appear to be associated with the cell cycle. Skeletal muscle, heart, colon, testis, ovary and pancreas.

The protein localises to the nucleus inner membrane. The protein resides in the nucleus outer membrane. In terms of biological role, stabilizes and promotes the formation of a nuclear actin cortical network. Stimulates actin polymerization in vitro by binding and stabilizing the pointed end of growing filaments. Inhibits beta-catenin activity by preventing its accumulation in the nucleus. Acts by influencing the nuclear accumulation of beta-catenin through a CRM1-dependent export pathway. Links centrosomes to the nuclear envelope via a microtubule association. Required for proper localization of non-farnesylated prelamin-A/C. Together with NEMP1, contributes to nuclear envelope stiffness in germ cells. EMD and BAF are cooperative cofactors of HIV-1 infection. Association of EMD with the viral DNA requires the presence of BAF and viral integrase. The association of viral DNA with chromatin requires the presence of BAF and EMD. In Homo sapiens (Human), this protein is Emerin (EMD).